Consider the following 433-residue polypeptide: Arabinooligosaccharide-binding protein (433 aa).

The first 21 residues, 1-21, serve as a signal peptide directing secretion; the sequence is MKKMTVCFLVLMMLLTLVIAG. Cys22 carries N-palmitoyl cysteine lipidation. Cys22 carries the S-diacylglycerol cysteine lipid modification.

This sequence belongs to the bacterial solute-binding protein 1 family. As to quaternary structure, the complex is composed of two ATP-binding proteins (MsmX), two transmembrane proteins (AraP and AraQ) and a solute-binding protein (AraN).

It localises to the cell membrane. Its function is as follows. Part of the ABC transporter complex AraNPQ involved in the uptake of arabinooligosaccharides. Transports alpha-1,5-arabinooligosaccharides, at least up to four L-arabinosyl units. AraN captures the substrate and delivers it to the two transmembrane components. The protein is Arabinooligosaccharide-binding protein of Bacillus subtilis (strain 168).